A 328-amino-acid chain; its full sequence is Reticulocalbin-3 (328 aa).

The N-terminal stretch at 1-20 (MMWRPSVLLLLLLLRHGAQG) is a signal peptide. The segment at 19-49 (QGKPSPDAGPHGQGRVHQAAPLSDAPHDDAH) is disordered. 6 EF-hand domains span residues 75–112 (ESQA…TQQR), 113–148 (HIRD…HYAP), 163–198 (KMLA…EEFP), 200–235 (MRDI…AEPG), 241–276 (WVQT…PAQD), and 277–312 (QPLV…FVGS). Asp92, Asp94, Trp96, Glu101, Asp126, Asp128, Asp130, Arg132, and Glu137 together coordinate Ca(2+). Asn140 carries N-linked (GlcNAc...) asparagine glycosylation. Residues Asp176, Asp178, Asp180, Met182, Glu187, Asp213, Asn215, Asp217, Tyr219, Glu224, Asp254, Asn256, Asp258, His260, Glu265, Asp290, Asp292, Asp294, Arg296, and Glu301 each contribute to the Ca(2+) site. The Prevents secretion from ER motif lies at 325–328 (HDEL).

This sequence belongs to the CREC family. In terms of assembly, interacts with PCSK6 (immature form including the propeptide); probably involved in the maturation and the secretion of PCSK6. In terms of processing, degraded by PCSK6 and other endoproteases including FURIN and PCSK5. Post-translationally, N-glycosylated. Widely expressed.

It is found in the endoplasmic reticulum lumen. In terms of biological role, probable molecular chaperone assisting protein biosynthesis and transport in the endoplasmic reticulum. Required for the proper biosynthesis and transport of pulmonary surfactant-associated protein A/SP-A, pulmonary surfactant-associated protein D/SP-D and the lipid transporter ABCA3. By regulating both the proper expression and the degradation through the endoplasmic reticulum-associated protein degradation pathway of these proteins plays a crucial role in pulmonary surfactant homeostasis. Has an anti-fibrotic activity by negatively regulating the secretion of type I and type III collagens. This calcium-binding protein also transiently associates with immature PCSK6 and regulates its secretion. The sequence is that of Reticulocalbin-3 from Homo sapiens (Human).